The following is a 657-amino-acid chain: Methionine--tRNA ligase (657 aa).

Positions 13 to 23 match the 'HIGH' region motif; it reads YYPSGNLHIGH. The 'KMSKS' region motif lies at 308–312; sequence KMSKS. Lysine 311 provides a ligand contact to ATP. Residues 557 to 657 enclose the tRNA-binding domain; the sequence is DFDKVEIKAA…SAIPNGAVIK (101 aa).

Belongs to the class-I aminoacyl-tRNA synthetase family. MetG type 2B subfamily. In terms of assembly, homodimer.

It localises to the cytoplasm. It catalyses the reaction tRNA(Met) + L-methionine + ATP = L-methionyl-tRNA(Met) + AMP + diphosphate. Is required not only for elongation of protein synthesis but also for the initiation of all mRNA translation through initiator tRNA(fMet) aminoacylation. This chain is Methionine--tRNA ligase, found in Staphylococcus aureus (strain Mu50 / ATCC 700699).